The chain runs to 252 residues: Hydroxyacylglutathione hydrolase (252 aa).

Residues H54, H56, D58, H59, H111, D130, and H170 each contribute to the Zn(2+) site.

This sequence belongs to the metallo-beta-lactamase superfamily. Glyoxalase II family. Monomer. It depends on Zn(2+) as a cofactor.

It catalyses the reaction an S-(2-hydroxyacyl)glutathione + H2O = a 2-hydroxy carboxylate + glutathione + H(+). It functions in the pathway secondary metabolite metabolism; methylglyoxal degradation; (R)-lactate from methylglyoxal: step 2/2. Functionally, thiolesterase that catalyzes the hydrolysis of S-D-lactoyl-glutathione to form glutathione and D-lactic acid. The polypeptide is Hydroxyacylglutathione hydrolase (Francisella tularensis subsp. novicida (strain U112)).